We begin with the raw amino-acid sequence, 257 residues long: Putative hydro-lyase Bphy_2364 (257 aa).

The protein belongs to the D-glutamate cyclase family.

This is Putative hydro-lyase Bphy_2364 from Paraburkholderia phymatum (strain DSM 17167 / CIP 108236 / LMG 21445 / STM815) (Burkholderia phymatum).